The chain runs to 436 residues: 3-ketoacyl-CoA thiolase (436 aa).

The Acyl-thioester intermediate role is filled by C99. Catalysis depends on proton acceptor residues H392 and C422.

The protein belongs to the thiolase-like superfamily. Thiolase family. Heterotetramer of two alpha chains (FadJ) and two beta chains (FadI).

The protein resides in the cytoplasm. It carries out the reaction an acyl-CoA + acetyl-CoA = a 3-oxoacyl-CoA + CoA. Its pathway is lipid metabolism; fatty acid beta-oxidation. In terms of biological role, catalyzes the final step of fatty acid oxidation in which acetyl-CoA is released and the CoA ester of a fatty acid two carbons shorter is formed. The protein is 3-ketoacyl-CoA thiolase of Escherichia coli O157:H7.